A 132-amino-acid polypeptide reads, in one-letter code: Small ribosomal subunit protein uS8 (132 aa).

The protein belongs to the universal ribosomal protein uS8 family. As to quaternary structure, part of the 30S ribosomal subunit. Contacts proteins S5 and S12.

Functionally, one of the primary rRNA binding proteins, it binds directly to 16S rRNA central domain where it helps coordinate assembly of the platform of the 30S subunit. The protein is Small ribosomal subunit protein uS8 of Streptococcus pneumoniae serotype 19F (strain G54).